Here is a 1529-residue protein sequence, read N- to C-terminus: ATP-dependent permease PDR15 (1529 aa).

Over residues 1-13 the composition is skewed to basic and acidic residues; sequence MSSDIRDVEERNS. The segment at 1–38 is disordered; it reads MSSDIRDVEERNSRSSSSSSSSNSAAQSIGQHPYRGFD. At 1 to 531 the chain is on the cytoplasmic side; sequence MSSDIRDVEE…NFWRMKQSAS (531 aa). Residues 14–24 are compositionally biased toward low complexity; it reads RSSSSSSSSNS. One can recognise an ABC transporter 1 domain in the interval 171-420; that stretch reads LRLLKPSKEE…FQDMGYYCPP (250 aa). The helical transmembrane segment at 532-552 threads the bilayer; the sequence is VTLWQVIGNSVMAFILGSMFY. The Extracellular portion of the chain corresponds to 553 to 567; sequence KVMKKNDTSTFYFRG. Asparagine 558 carries an N-linked (GlcNAc...) asparagine glycan. Residues 568 to 588 traverse the membrane as a helical segment; sequence AAMFFAILFNAFSCLLEIFSL. The Cytoplasmic segment spans residues 589-617; sequence YETRPITEKHRTYSLYHPSADAFASVLSE. Residues 618 to 638 form a helical membrane-spanning segment; that stretch reads MPPKLITAVCFNIIFYFLVDF. Topologically, residues 639-642 are extracellular; sequence RRNG. A helical membrane pass occupies residues 643-663; that stretch reads GVFFFYFLINVIATFTLSHLF. Residues 664-699 lie on the Cytoplasmic side of the membrane; sequence RCVGSLTKTLQEAMVPASMLLLAISMYTGFAIPKTK. Residues 700-720 form a helical membrane-spanning segment; sequence ILGWSIWIWYINPLAYLFESL. Residues 721 to 783 are Extracellular-facing; sequence MINEFHDRRF…YDYEHKHKWR (63 aa). The N-linked (GlcNAc...) asparagine glycan is linked to asparagine 744. The chain crosses the membrane as a helical span at residues 784-804; the sequence is GFGIGMAYVVFFFFVYLILCE. Topologically, residues 805-1219 are cytoplasmic; sequence YNEGAKQKGE…LFQQYWRSPD (415 aa). The segment covering 829–840 has biased composition (basic and acidic residues); it reads EGKLQEKHRPGD. The segment at 829-873 is disordered; sequence EGKLQEKHRPGDIENNAGSSPDSATTEKKILDDSSEGSDSSSDNA. Positions 884–1127 constitute an ABC transporter 2 domain; sequence FHWRDLCYDV…MIDYFESKGA (244 aa). Position 920–927 (920–927) interacts with ATP; that stretch reads GASGAGKT. The chain crosses the membrane as a helical span at residues 1220 to 1240; the sequence is YLWSKFILTIFNQVFIGFTFF. Residues 1241 to 1312 lie on the Extracellular side of the membrane; sequence KADRSLQGLQ…VEIPWNILAG (72 aa). Residues 1313–1333 form a helical membrane-spanning segment; the sequence is TIAYCIYYYAVGFYANASAAG. The Cytoplasmic portion of the chain corresponds to 1334-1340; that stretch reads QLHERGA. The chain crosses the membrane as a helical span at residues 1341–1361; sequence LFWLFSIAFYVYIGSMGLLMI. Residues 1362 to 1368 are Extracellular-facing; it reads SFNEVAE. The helical transmembrane segment at 1369 to 1389 threads the bilayer; that stretch reads TAAHMGTLLFTMALSFCGVMA. Over 1390–1396 the chain is Cytoplasmic; sequence TPKVMPR. A helical membrane pass occupies residues 1397–1417; sequence FWIFMYRVSPLTYMIDALLAL. The Extracellular portion of the chain corresponds to 1418–1492; sequence GVANVDVKCS…SSHYYRRWRN (75 aa). The chain crosses the membrane as a helical span at residues 1493-1513; it reads YGIFICYIAFDYIAATFLYWL. At 1514 to 1529 the chain is on the cytoplasmic side; the sequence is SRVPKKNGKISEKPKK.

It belongs to the ABC transporter superfamily. ABCG family. PDR (TC 3.A.1.205) subfamily.

It localises to the membrane. In Saccharomyces cerevisiae (strain ATCC 204508 / S288c) (Baker's yeast), this protein is ATP-dependent permease PDR15 (PDR15).